Consider the following 403-residue polypeptide: Histidine--tRNA ligase (403 aa).

This sequence belongs to the class-II aminoacyl-tRNA synthetase family. In terms of assembly, homodimer.

The protein resides in the cytoplasm. The catalysed reaction is tRNA(His) + L-histidine + ATP = L-histidyl-tRNA(His) + AMP + diphosphate + H(+). The chain is Histidine--tRNA ligase (hisS) from Aquifex aeolicus (strain VF5).